The primary structure comprises 366 residues: tRNA-specific 2-thiouridylase MnmA (366 aa).

ATP contacts are provided by residues 6–13 (AMSGGVDS) and Leu-32. Cys-101 functions as the Nucleophile in the catalytic mechanism. An intrachain disulfide couples Cys-101 to Cys-197. Gly-125 serves as a coordination point for ATP. Positions 147–149 (KDQ) are interaction with tRNA. Cys-197 (cysteine persulfide intermediate) is an active-site residue.

Belongs to the MnmA/TRMU family.

The protein resides in the cytoplasm. The catalysed reaction is S-sulfanyl-L-cysteinyl-[protein] + uridine(34) in tRNA + AH2 + ATP = 2-thiouridine(34) in tRNA + L-cysteinyl-[protein] + A + AMP + diphosphate + H(+). Its function is as follows. Catalyzes the 2-thiolation of uridine at the wobble position (U34) of tRNA, leading to the formation of s(2)U34. This is tRNA-specific 2-thiouridylase MnmA from Cutibacterium acnes (strain DSM 16379 / KPA171202) (Propionibacterium acnes).